The chain runs to 265 residues: Aquaporin-5 (265 aa).

Residues 1–12 (MKKEVCSAAFLK) are Cytoplasmic-facing. Residues 13–33 (AVFAEFLATLIFVFFGLGSAL) form a helical membrane-spanning segment. The Extracellular segment spans residues 34 to 39 (KWPSAM). The helical transmembrane segment at 40-60 (PSVLQISLAFGLAIGTMAQAL) threads the bilayer. Residues 61–65 (GPVSG) lie on the Cytoplasmic side of the membrane. Residues 66–74 (GHMNPAITL) constitute an intramembrane region (discontinuously helical). Residues 69 to 71 (NPA) carry the NPA 1 motif. At 75-87 (ALLVGNQISLLRA) the chain is on the cytoplasmic side. Residues 88–108 (VFYLVAQLVGAIAGAAILYGL) traverse the membrane as a helical segment. The Extracellular portion of the chain corresponds to 109-126 (APYNARSNLAVNALNNNT). N-linked (GlcNAc...) asparagine glycans are attached at residues Asn-124 and Asn-125. Residues 127–147 (TAGQAVVAEMILTFQLALCVF) traverse the membrane as a helical segment. Residues 148 to 158 (SSTDSRRTSPV) lie on the Cytoplasmic side of the membrane. The helical transmembrane segment at 159–179 (GSPALSIGLSVTLGHLVGIYF) threads the bilayer. Residue Thr-180 is a topological domain, extracellular. The segment at residues 181–191 (GCSMNPARSFG) is an intramembrane region (discontinuously helical). The NPA 2 motif lies at 185–187 (NPA). The Extracellular segment spans residues 192–203 (PAVIMSRFSSAH). Residues 204–224 (WVFWVGPIVGAATAAIIYFYL) traverse the membrane as a helical segment. The Cytoplasmic portion of the chain corresponds to 225–265 (LFPHSLSLSDRVAILKGTYEPDEDWEESQEERKKTMELTAH).

The protein belongs to the MIP/aquaporin (TC 1.A.8) family. In terms of assembly, homotetramer; each monomer provides an independent water pore. Interacts with TRPV4; the interaction is probably indirect and regulates TRPV4 activation by hypotonicity.

It localises to the apical cell membrane. It is found in the cell membrane. Its subcellular location is the cytoplasmic vesicle membrane. The catalysed reaction is H2O(in) = H2O(out). Its function is as follows. Aquaporins form homotetrameric transmembrane channels, with each monomer independently mediating water transport across the plasma membrane along its osmotic gradient. Plays an important role in fluid secretion in salivary glands. Required for TRPV4 activation by hypotonicity. Together with TRPV4, controls regulatory volume decrease in salivary epithelial cells. Seems to play a redundant role in water transport in the eye, lung and in sweat glands. The chain is Aquaporin-5 from Ovis aries (Sheep).